A 301-amino-acid chain; its full sequence is Ribosomal RNA small subunit methyltransferase H (301 aa).

Residues 35–37, aspartate 55, phenylalanine 84, aspartate 105, and glutamine 112 contribute to the S-adenosyl-L-methionine site; that span reads GGH.

The protein belongs to the methyltransferase superfamily. RsmH family.

Its subcellular location is the cytoplasm. The enzyme catalyses cytidine(1402) in 16S rRNA + S-adenosyl-L-methionine = N(4)-methylcytidine(1402) in 16S rRNA + S-adenosyl-L-homocysteine + H(+). Its function is as follows. Specifically methylates the N4 position of cytidine in position 1402 (C1402) of 16S rRNA. The sequence is that of Ribosomal RNA small subunit methyltransferase H from Chloroflexus aurantiacus (strain ATCC 29366 / DSM 635 / J-10-fl).